Reading from the N-terminus, the 157-residue chain is Endoribonuclease YbeY (157 aa).

Residues histidine 118, histidine 122, and histidine 128 each contribute to the Zn(2+) site.

The protein belongs to the endoribonuclease YbeY family. Requires Zn(2+) as cofactor.

The protein localises to the cytoplasm. Its function is as follows. Single strand-specific metallo-endoribonuclease involved in late-stage 70S ribosome quality control and in maturation of the 3' terminus of the 16S rRNA. The polypeptide is Endoribonuclease YbeY (Bordetella parapertussis (strain 12822 / ATCC BAA-587 / NCTC 13253)).